Reading from the N-terminus, the 344-residue chain is Biotin synthase (344 aa).

A Radical SAM core domain is found at 65 to 290 (PEVEVEGIIS…RTMLRFAGGR (226 aa)). Residues cysteine 80, cysteine 84, and cysteine 87 each coordinate [4Fe-4S] cluster. [2Fe-2S] cluster is bound by residues cysteine 123, cysteine 156, cysteine 215, and arginine 285.

It belongs to the radical SAM superfamily. Biotin synthase family. As to quaternary structure, homodimer. The cofactor is [4Fe-4S] cluster. It depends on [2Fe-2S] cluster as a cofactor.

It carries out the reaction (4R,5S)-dethiobiotin + (sulfur carrier)-SH + 2 reduced [2Fe-2S]-[ferredoxin] + 2 S-adenosyl-L-methionine = (sulfur carrier)-H + biotin + 2 5'-deoxyadenosine + 2 L-methionine + 2 oxidized [2Fe-2S]-[ferredoxin]. It participates in cofactor biosynthesis; biotin biosynthesis; biotin from 7,8-diaminononanoate: step 2/2. Its function is as follows. Catalyzes the conversion of dethiobiotin (DTB) to biotin by the insertion of a sulfur atom into dethiobiotin via a radical-based mechanism. The chain is Biotin synthase from Mycolicibacterium paratuberculosis (strain ATCC BAA-968 / K-10) (Mycobacterium paratuberculosis).